We begin with the raw amino-acid sequence, 256 residues long: MLIVVSPAKTLDYETPVPTTENTQPRFLPQSAELVDILKQKEPWRLSELMGVSDELATLNANRYQSWSLPFNEDNARQALFAFKGDVYTGLDAYSLEQDAISAAQRQLRILSGLYGVLRPLDLMQPYRLEMGTRLQNAKGANLYRFWGDTLTQSLNEEVRETGADVLINLASNEYYKAVNEKKLAVPVITPMFLDMKGGKYKVVSFWAKKARGMMTRYILQNRLQRPEEIKNFDTDGYSYNPALSDGAQWAFTRDH.

It belongs to the UPF0246 family.

The chain is UPF0246 protein HCH_04801 from Hahella chejuensis (strain KCTC 2396).